The chain runs to 205 residues: Thiamine-phosphate synthase (205 aa).

4-amino-2-methyl-5-(diphosphooxymethyl)pyrimidine contacts are provided by residues 35-39 and asparagine 67; that span reads QYRDK. The Mg(2+) site is built by aspartate 68 and aspartate 86. Threonine 105 contributes to the 4-amino-2-methyl-5-(diphosphooxymethyl)pyrimidine binding site. A 2-[(2R,5Z)-2-carboxy-4-methylthiazol-5(2H)-ylidene]ethyl phosphate-binding site is contributed by 132–134; that stretch reads SLT. Lysine 135 serves as a coordination point for 4-amino-2-methyl-5-(diphosphooxymethyl)pyrimidine. 2-[(2R,5Z)-2-carboxy-4-methylthiazol-5(2H)-ylidene]ethyl phosphate is bound at residue glycine 162.

Belongs to the thiamine-phosphate synthase family. Requires Mg(2+) as cofactor.

The catalysed reaction is 2-[(2R,5Z)-2-carboxy-4-methylthiazol-5(2H)-ylidene]ethyl phosphate + 4-amino-2-methyl-5-(diphosphooxymethyl)pyrimidine + 2 H(+) = thiamine phosphate + CO2 + diphosphate. It carries out the reaction 2-(2-carboxy-4-methylthiazol-5-yl)ethyl phosphate + 4-amino-2-methyl-5-(diphosphooxymethyl)pyrimidine + 2 H(+) = thiamine phosphate + CO2 + diphosphate. It catalyses the reaction 4-methyl-5-(2-phosphooxyethyl)-thiazole + 4-amino-2-methyl-5-(diphosphooxymethyl)pyrimidine + H(+) = thiamine phosphate + diphosphate. The protein operates within cofactor biosynthesis; thiamine diphosphate biosynthesis; thiamine phosphate from 4-amino-2-methyl-5-diphosphomethylpyrimidine and 4-methyl-5-(2-phosphoethyl)-thiazole: step 1/1. Its function is as follows. Condenses 4-methyl-5-(beta-hydroxyethyl)thiazole monophosphate (THZ-P) and 2-methyl-4-amino-5-hydroxymethyl pyrimidine pyrophosphate (HMP-PP) to form thiamine monophosphate (TMP). The chain is Thiamine-phosphate synthase from Pseudomonas syringae pv. syringae (strain B728a).